A 184-amino-acid polypeptide reads, in one-letter code: Ribosome-recycling factor (184 aa).

The protein belongs to the RRF family.

The protein resides in the cytoplasm. In terms of biological role, responsible for the release of ribosomes from messenger RNA at the termination of protein biosynthesis. May increase the efficiency of translation by recycling ribosomes from one round of translation to another. This chain is Ribosome-recycling factor, found in Borrelia garinii subsp. bavariensis (strain ATCC BAA-2496 / DSM 23469 / PBi) (Borreliella bavariensis).